Reading from the N-terminus, the 451-residue chain is MAHTPATADVAPIPPTPEQQQFVDWLRAVAPYIHAFRDKTFVIGFGGELVKAGMLGALVNDIALLHAMGMHIVLVHGSRPQVEEQLALRHVQTQFVDGIRVTDNAALESAKEASGELRLDIEATFSQALPNTPMAGARISVVSGNFVTARPVGIVNGVDFQHTGLVRKIDAESIQHSLSNRKIVLLSPLGFSPTGQAFNLSMEDVATNTATALKADKLIFITEVPGIMDRVGKLQQELSMESAIERLREGRLSADTAYYLQHIVKAMRGGVRRAHLIPFALDGSILLELFLHDGVGTMVSHTDLEYLREATLDDVGGIVQLIEPLEADGTLVPRERRLLERDIANFSVIEHDGIIFGCAALYPYPKEGVGEMACLTVAPDTQGTGDGERLLKHVEARARAVGLKRLFVLTTRTEHWFLKRGFVHATVDDLPEDRRKLYNWQRRSMVLMKKL.

One can recognise an N-acetyltransferase domain in the interval 305 to 451 (EYLREATLDD…RRSMVLMKKL (147 aa)).

This sequence belongs to the acetyltransferase family. ArgA subfamily.

The protein localises to the cytoplasm. The enzyme catalyses L-glutamate + acetyl-CoA = N-acetyl-L-glutamate + CoA + H(+). Its pathway is amino-acid biosynthesis; L-arginine biosynthesis; N(2)-acetyl-L-ornithine from L-glutamate: step 1/4. This chain is Amino-acid acetyltransferase (argA), found in Ralstonia nicotianae (strain ATCC BAA-1114 / GMI1000) (Ralstonia solanacearum).